A 276-amino-acid polypeptide reads, in one-letter code: MRESLKNSKRLVIKVGTSTLMYGNGHINLRTIEKLAMVLSDLRNEGKEVILVSSGAIGVGCHKLQLPVRPTSIPEQQAVASVGQSELMHIYSKFFGEYGQVVGQVLLTRDVTDFPISRENVMNTLESLLERGIIPIVNENDTVAVEELEHVTKYGDNDLLSAIVAKLVQADLLIMLSDIDGFYGSNPSTDPDAVMFSEINQITPEIEALAGGKGSKFGTGGMLTKLSAASYCMNANQKMILTNGKNPTIIFDIMQGEQVGTLFASKKEEFSHDGTH.

K14 contacts ATP. Residues S54, D141, and N157 each coordinate substrate. Residues 177–178 (SD) and 219–225 (TGGMLTK) contribute to the ATP site.

This sequence belongs to the glutamate 5-kinase family.

The protein resides in the cytoplasm. The catalysed reaction is L-glutamate + ATP = L-glutamyl 5-phosphate + ADP. Its pathway is amino-acid biosynthesis; L-proline biosynthesis; L-glutamate 5-semialdehyde from L-glutamate: step 1/2. Catalyzes the transfer of a phosphate group to glutamate to form L-glutamate 5-phosphate. In Listeria innocua serovar 6a (strain ATCC BAA-680 / CLIP 11262), this protein is Glutamate 5-kinase.